Reading from the N-terminus, the 1639-residue chain is RIMS-binding protein 3A (1639 aa).

3 disordered regions span residues 1–22, 215–240, and 295–364; these read MAKD…SSPA, GSPD…CHAP, and SLDS…LTPS. A coiled-coil region spans residues 21 to 143; it reads PAAAVLENQR…ELQRQLAEEL (123 aa). Residues 326–339 show a composition bias toward pro residues; it reads SPPPSPLPPPPPPS. 2 coiled-coil regions span residues 409 to 442 and 480 to 619; these read QADE…QETN and LAKD…AEEN. The tract at residues 697-811 is disordered; sequence CRPGHPPEQP…DRDTASEVDD (115 aa). Composition is skewed to polar residues over residues 707-718 and 761-775; these read WETSQMPESQVK and SVPQ…SQPL. Residues 776 to 790 are compositionally biased toward low complexity; sequence SKKTSSQSNSSSEGS. Residues 832–899 enclose the SH3 1 domain; that stretch reads PKLKIFMAQY…PSNFVEQIPD (68 aa). Fibronectin type-III domains lie at 995–1083 and 1088–1184; these read APMQ…TLLA and PPLD…IPED. Disordered stretches follow at residues 1251 to 1273 and 1292 to 1330; these read PRRQ…GAGS and QKSP…FIHL. Residues 1293-1305 are compositionally biased toward polar residues; sequence KSPQNHRPPSVSD. SH3 domains are found at residues 1452–1520 and 1569–1636; these read TPAR…EMEV and WTPK…HMSL.

This sequence belongs to the RIMBP family. In terms of assembly, interacts with LRGUK (via guanylate kinase-like domain). Interacts (via C-terminus) with HOOK1 (via coiled-coil region).

It is found in the cytoplasm. The protein resides in the cytoskeleton. In terms of biological role, probable component of the manchette, a microtubule-based structure which plays a key role in sperm head morphogenesis during late stages of sperm development. This is RIMS-binding protein 3A (RIMBP3) from Homo sapiens (Human).